Reading from the N-terminus, the 301-residue chain is Multifunctional dioxygenase ausE (301 aa).

2 residues coordinate substrate: R72 and Q127. Fe cation contacts are provided by H130 and D132. T167 provides a ligand contact to substrate. Residue H214 coordinates Fe cation. R226 serves as a coordination point for substrate.

Belongs to the PhyH family. In terms of assembly, homodimer. It depends on Fe cation as a cofactor.

It carries out the reaction preaustinoid A1 + 2-oxoglutarate + O2 = preaustinoid A2 + succinate + CO2 + H2O. The catalysed reaction is preaustinoid A2 + 2-oxoglutarate + O2 = preaustinoid A3 + succinate + CO2 + H2O. It catalyses the reaction berkeleyone A + 2-oxoglutarate + O2 = preaustinoid A + succinate + CO2 + H2O. It functions in the pathway secondary metabolite biosynthesis; terpenoid biosynthesis. Its function is as follows. Multifunctional dioxygenase; part of the gene cluster A that mediates the biosynthesis of the fungal meroterpenoid acetoxydehydroaustin. The first step of the pathway is the synthesis of 3,5-dimethylorsellinic acid by the polyketide synthase ausA. 3,5-dimethylorsellinic acid is then prenylated by the polyprenyl transferase ausN. Further epoxidation by the FAD-dependent monooxygenase ausM and cyclization by the probable terpene cyclase ausL lead to the formation of protoaustinoid A. Protoaustinoid A is then oxidized to spiro-lactone preaustinoid A3 by the combined action of the FAD-binding monooxygenases ausB and ausC, and the dioxygenase ausE. Acid-catalyzed keto-rearrangement and ring contraction of the tetraketide portion of preaustinoid A3 by ausJ lead to the formation of preaustinoid A4. The aldo-keto reductase ausK, with the help of ausH, is involved in the next step by transforming preaustinoid A4 into isoaustinone which is in turn hydroxylated by the P450 monooxygenase ausI to form austinolide. The cytochrome P450 monooxygenase ausG then modifies austinolide to austinol. Austinol is further acetylated to austin by the O-acetyltransferase ausP, which spontaneously changes to dehydroaustin. The cytochrome P450 monooxygenase then converts dehydroaustin is into 7-dehydrodehydroaustin. The hydroxylation catalyzed by ausR permits the second O-acetyltransferase ausQ to add an additional acetyl group to the molecule, leading to the formation of acetoxydehydroaustin. Due to genetic rearrangements of the clusters and the subsequent loss of some enzymes, the end product of the Penicillium brasilianum austinoid biosynthesis clusters is acetoxydehydroaustin. This chain is Multifunctional dioxygenase ausE, found in Penicillium brasilianum.